A 149-amino-acid polypeptide reads, in one-letter code: Deoxyuridine 5'-triphosphate nucleotidohydrolase (149 aa).

Substrate-binding positions include 68–70 (RSG), asparagine 81, 85–87 (LID), and methionine 95.

This sequence belongs to the dUTPase family. Mg(2+) serves as cofactor.

The enzyme catalyses dUTP + H2O = dUMP + diphosphate + H(+). It functions in the pathway pyrimidine metabolism; dUMP biosynthesis; dUMP from dCTP (dUTP route): step 2/2. This enzyme is involved in nucleotide metabolism: it produces dUMP, the immediate precursor of thymidine nucleotides and it decreases the intracellular concentration of dUTP so that uracil cannot be incorporated into DNA. The chain is Deoxyuridine 5'-triphosphate nucleotidohydrolase from Albidiferax ferrireducens (strain ATCC BAA-621 / DSM 15236 / T118) (Rhodoferax ferrireducens).